The following is a 446-amino-acid chain: Glucosylglycerate hydrolase (446 aa).

Residues Y36, 40–43, Y88, Q115, and G180 each bind substrate; that span reads WSWD. The Proton donor role is filled by D182. Substrate-binding positions include R216 and 375-376; that span reads YW. Residue E419 is the Proton acceptor of the active site. Q434 is a substrate binding site.

This sequence belongs to the glycosyl hydrolase 63 family. In terms of assembly, homotetramer. Dimer of dimers.

It carries out the reaction (2R)-2-O-(alpha-D-glucopyranosyl)-glycerate + H2O = (R)-glycerate + D-glucose. Its activity is regulated as follows. Activity is not dependent on divalent cations, but it is enhanced by Mg(2+). Its function is as follows. Catalyzes the hydrolysis of glucosylglycerate (GG) to glycerate and glucose. Involved in recovery from nitrogen starvation by promoting the rapid mobilization of the glucosylglycerate that accumulates under these conditions. Can also hydrolyze mannosylglycerate (MG), with tenfold lower efficiency. The polypeptide is Glucosylglycerate hydrolase (Mycolicibacterium hassiacum (strain DSM 44199 / CIP 105218 / JCM 12690 / 3849) (Mycobacterium hassiacum)).